The primary structure comprises 142 residues: Putative pre-16S rRNA nuclease (142 aa).

The protein belongs to the YqgF nuclease family.

It is found in the cytoplasm. Functionally, could be a nuclease involved in processing of the 5'-end of pre-16S rRNA. This Lawsonia intracellularis (strain PHE/MN1-00) protein is Putative pre-16S rRNA nuclease.